The chain runs to 346 residues: Holliday junction branch migration complex subunit RuvB (346 aa).

A large ATPase domain (RuvB-L) region spans residues 2–183; sequence TDDRIIGAGA…FGIVQRLEFY (182 aa). Residues isoleucine 22, arginine 23, glycine 64, lysine 67, threonine 68, threonine 69, 130-132, arginine 173, tyrosine 183, and arginine 220 contribute to the ATP site; that span reads EDF. Position 68 (threonine 68) interacts with Mg(2+). The segment at 184–254 is small ATPAse domain (RuvB-S); sequence SVEELTRIVR…VAQAAMKMLK (71 aa). The interval 257-346 is head domain (RuvB-H); the sequence is PEGFDELDRR…DLFAEVPDVG (90 aa). 3 residues coordinate DNA: arginine 293, arginine 312, and arginine 317.

Belongs to the RuvB family. In terms of assembly, homohexamer. Forms an RuvA(8)-RuvB(12)-Holliday junction (HJ) complex. HJ DNA is sandwiched between 2 RuvA tetramers; dsDNA enters through RuvA and exits via RuvB. An RuvB hexamer assembles on each DNA strand where it exits the tetramer. Each RuvB hexamer is contacted by two RuvA subunits (via domain III) on 2 adjacent RuvB subunits; this complex drives branch migration. In the full resolvosome a probable DNA-RuvA(4)-RuvB(12)-RuvC(2) complex forms which resolves the HJ.

It localises to the cytoplasm. The catalysed reaction is ATP + H2O = ADP + phosphate + H(+). The RuvA-RuvB-RuvC complex processes Holliday junction (HJ) DNA during genetic recombination and DNA repair, while the RuvA-RuvB complex plays an important role in the rescue of blocked DNA replication forks via replication fork reversal (RFR). RuvA specifically binds to HJ cruciform DNA, conferring on it an open structure. The RuvB hexamer acts as an ATP-dependent pump, pulling dsDNA into and through the RuvAB complex. RuvB forms 2 homohexamers on either side of HJ DNA bound by 1 or 2 RuvA tetramers; 4 subunits per hexamer contact DNA at a time. Coordinated motions by a converter formed by DNA-disengaged RuvB subunits stimulates ATP hydrolysis and nucleotide exchange. Immobilization of the converter enables RuvB to convert the ATP-contained energy into a lever motion, pulling 2 nucleotides of DNA out of the RuvA tetramer per ATP hydrolyzed, thus driving DNA branch migration. The RuvB motors rotate together with the DNA substrate, which together with the progressing nucleotide cycle form the mechanistic basis for DNA recombination by continuous HJ branch migration. Branch migration allows RuvC to scan DNA until it finds its consensus sequence, where it cleaves and resolves cruciform DNA. The sequence is that of Holliday junction branch migration complex subunit RuvB from Stenotrophomonas maltophilia (strain R551-3).